The sequence spans 138 residues: Acidic phospholipase A2 CH-E6' (138 aa).

Residues 1–16 (MRTLWIVAVLLLGVEG) form the signal peptide. 7 disulfide bridges follow: C42–C131, C44–C60, C59–C111, C65–C138, C66–C104, C73–C97, and C91–C102. Residues Y43, G45, and G47 each contribute to the Ca(2+) site. Residue H63 is part of the active site. Residue D64 coordinates Ca(2+). The active site involves D105.

It belongs to the phospholipase A2 family. Group II subfamily. D49 sub-subfamily. It depends on Ca(2+) as a cofactor. Expressed by the venom gland.

It is found in the secreted. It catalyses the reaction a 1,2-diacyl-sn-glycero-3-phosphocholine + H2O = a 1-acyl-sn-glycero-3-phosphocholine + a fatty acid + H(+). Its function is as follows. Snake venom phospholipase A2 (PLA2) that shows high lipolytic and weak ADP-induced platelet aggregation activities. Also shows weak anticoagulant activity. PLA2 catalyzes the calcium-dependent hydrolysis of the 2-acyl groups in 3-sn-phosphoglycerides. In Crotalus horridus (Timber rattlesnake), this protein is Acidic phospholipase A2 CH-E6'.